The following is a 226-amino-acid chain: Ribonuclease S-7 (226 aa).

The first 27 residues, 1 to 27 (MGITGMIYIVTMVFSLIVLILSSSTVG), serve as a signal peptide directing secretion. Glutamine 36 contacts RNA. A disulfide bridge links cysteine 42 with cysteine 49. Histidine 60 provides a ligand contact to RNA. Residue histidine 60 is the Proton donor of the active site. Asparagine 74 and asparagine 77 each carry an N-linked (GlcNAc...) asparagine; alternate glycan. Cysteine 75 and cysteine 119 form a disulfide bridge. RNA is bound by residues 98–99 (NV), phenylalanine 108, 111–112 (KQ), and 115–116 (KH). Glutamine 112 is a catalytic residue. Catalysis depends on histidine 116, which acts as the Proton acceptor. Asparagine 126, asparagine 144, and asparagine 172 each carry an N-linked (GlcNAc...) asparagine glycan. Cystine bridges form between cysteine 183–cysteine 220 and cysteine 198–cysteine 209.

The protein belongs to the RNase T2 family. The N-glycans attached at Asn-74 and Asn-77 consist of either monosaccharide (GlcNAc) or disaccharide (GlcNAc-GlcNAc) that could not be distinguished. The N-glycan at Asn-144 contains mannose and xylose, and at Asn-126 contains mannose, xylose and fucose. The N-glycan at Asn-172 consists of disaccharide (GlcNAc-GlcNAc).

It carries out the reaction a ribonucleotidyl-ribonucleotide-RNA + H2O = a 3'-end 3'-phospho-ribonucleotide-RNA + a 5'-end dephospho-ribonucleoside-RNA + H(+). In terms of biological role, self-incompatibility (SI) is the inherited ability of a flowering plant to prevent self-fertilization by discriminating between self and non-self pollen during pollination. In many species, self-incompatibility is controlled by the single, multiallelic locus S. In Pyrus pyrifolia (Chinese pear), this protein is Ribonuclease S-7.